A 394-amino-acid chain; its full sequence is Elongation factor Tu (394 aa).

In terms of domain architecture, tr-type G spans 10–204 (KPHLNVGTIG…TLDTYIEDPV (195 aa)). Residues 19–26 (GHVDHGKT) form a G1 region. 19–26 (GHVDHGKT) contacts GTP. Mg(2+) is bound at residue threonine 26. The G2 stretch occupies residues 60 to 64 (GITIK). The tract at residues 81-84 (DCPG) is G3. GTP is bound by residues 81–85 (DCPGH) and 136–139 (NKCD). A G4 region spans residues 136-139 (NKCD). Positions 174-176 (SAL) are G5.

It belongs to the TRAFAC class translation factor GTPase superfamily. Classic translation factor GTPase family. EF-Tu/EF-1A subfamily. Monomer.

It localises to the cytoplasm. It carries out the reaction GTP + H2O = GDP + phosphate + H(+). GTP hydrolase that promotes the GTP-dependent binding of aminoacyl-tRNA to the A-site of ribosomes during protein biosynthesis. In Onion yellows phytoplasma (strain OY-M), this protein is Elongation factor Tu.